We begin with the raw amino-acid sequence, 455 residues long: Indoleacetamide hydrolase (455 aa).

Active-site charge relay system residues include lysine 71 and serine 146. Serine 170 functions as the Acyl-ester intermediate in the catalytic mechanism.

Belongs to the amidase family.

The protein operates within plant hormone metabolism; auxin biosynthesis. Hydrolyzes indole-3-acetamide (IAM) into indole-3-acetic acid (IAA). In Pseudomonas savastanoi (Pseudomonas syringae pv. savastanoi), this protein is Indoleacetamide hydrolase (iaaH).